Consider the following 127-residue polypeptide: Small ribosomal subunit protein uS11 (127 aa).

The protein belongs to the universal ribosomal protein uS11 family. Part of the 30S ribosomal subunit. Interacts with proteins S7 and S18. Binds to IF-3.

Its function is as follows. Located on the platform of the 30S subunit, it bridges several disparate RNA helices of the 16S rRNA. Forms part of the Shine-Dalgarno cleft in the 70S ribosome. This Streptococcus pyogenes serotype M1 protein is Small ribosomal subunit protein uS11.